The primary structure comprises 758 residues: Vitamin K-dependent gamma-carboxylase (758 aa).

The interval 1–22 is disordered; that stretch reads MAVSAGSARTSPSSDKVQKDKA. An N-acetylalanine modification is found at alanine 2. The Cytoplasmic segment spans residues 2 to 60; it reads AVSAGSARTSPSSDKVQKDKAELISGPRQDSRIGKLLGFEWTDLSSWRRLVTLLNRPTD. The chain crosses the membrane as a helical span at residues 61–81; the sequence is PASLAVFRFLFGFLMVLDIPQ. Residues 82–113 lie on the Lumenal side of the membrane; the sequence is ERGLSSLDRKYLDGLDVCRFPLLDALRPLPLD. Cysteine 99 and cysteine 450 are oxidised to a cystine. A helical transmembrane segment spans residues 114–134; the sequence is WMYLVYTIMFLGALGMMLGLC. Over 135 to 136 the chain is Cytoplasmic; that stretch reads YR. The helical transmembrane segment at 137-157 threads the bilayer; it reads ISCVLFLLPYWYVFLLDKTSW. At 158-292 the chain is on the lumenal side; sequence NNHSYLYGLL…VSYFHCMNSQ (135 aa). Lysine 218 functions as the Proton acceptor in the catalytic mechanism. A helical transmembrane segment spans residues 293–313; the sequence is LFSIGMFSYVMLASSPLFCSP. Over 314-361 the chain is Cytoplasmic; sequence EWPRKLVSYCPRRLQQLLPLKAAPQPSVSCVYKRSRGKSGQKPGLRHQ. A helical transmembrane segment spans residues 362-382; sequence LGAAFTLLYLLEQLFLPYSHF. Over 383-758 the chain is Lumenal; that stretch reads LTQGYNNWTN…SNPDPVHSEF (376 aa). N-linked (GlcNAc...) asparagine glycans are attached at residues asparagine 459 and asparagine 550. Residues 732-758 form a disordered region; sequence GELNPSNTDSSHSNPPESNPDPVHSEF. Residues 735 to 747 are compositionally biased toward polar residues; it reads NPSNTDSSHSNPP.

This sequence belongs to the vitamin K-dependent gamma-carboxylase family. In terms of assembly, monomer. May interact with CALU.

It localises to the endoplasmic reticulum membrane. It catalyses the reaction 4-carboxy-L-glutamyl-[protein] + 2,3-epoxyphylloquinone + H2O + H(+) = phylloquinol + L-glutamyl-[protein] + CO2 + O2. Its function is as follows. Mediates the vitamin K-dependent carboxylation of glutamate residues to calcium-binding gamma-carboxyglutamate (Gla) residues with the concomitant conversion of the reduced hydroquinone form of vitamin K to vitamin K epoxide. Catalyzes gamma-carboxylation of various proteins, such as blood coagulation factors (F2, F7, F9 and F10), osteocalcin (BGLAP) or matrix Gla protein (MGP). This Homo sapiens (Human) protein is Vitamin K-dependent gamma-carboxylase (GGCX).